We begin with the raw amino-acid sequence, 465 residues long: Tubulin gamma chain (465 aa).

144–150 (AGGTGSG) is a GTP binding site.

Belongs to the tubulin family.

Its subcellular location is the cytoplasm. It localises to the cytoskeleton. It is found in the microtubule organizing center. The protein localises to the spindle pole body. In terms of biological role, tubulin is the major constituent of microtubules. The gamma chain is found at microtubule organizing centers (MTOC) such as the spindle poles or the centrosome, suggesting that it is involved in the minus-end nucleation of microtubule assembly. The sequence is that of Tubulin gamma chain (TUB4) from Candida glabrata (strain ATCC 2001 / BCRC 20586 / JCM 3761 / NBRC 0622 / NRRL Y-65 / CBS 138) (Yeast).